Here is a 439-residue protein sequence, read N- to C-terminus: Beta-1,3-galactosyl-O-glycosyl-glycoprotein beta-1,6-N-acetylglucosaminyltransferase (439 aa).

Topologically, residues 1-11 are cytoplasmic; it reads MVGWKKKKLCR. Residues 12-29 form a helical; Signal-anchor for type II membrane protein membrane-spanning segment; it reads GHHLWVLGCYMLLAVVSL. Residues 30–439 lie on the Lumenal side of the membrane; the sequence is RLSLRFKCDV…RHKAIYGTEL (410 aa). Asparagine 71 and asparagine 107 each carry an N-linked (GlcNAc...) asparagine; by host glycan. 4 cysteine pairs are disulfide-bonded: cysteine 72–cysteine 229, cysteine 163–cysteine 383, cysteine 184–cysteine 211, and cysteine 392–cysteine 424.

Belongs to the glycosyltransferase 14 family.

Its subcellular location is the host Golgi apparatus membrane. It catalyses the reaction a 3-O-[beta-D-galactosyl-(1-&gt;3)-N-acetyl-alpha-D-galactosaminyl]-L-seryl-[protein] + UDP-N-acetyl-alpha-D-glucosamine = 3-O-{beta-D-galactosyl-(1-&gt;3)-[N-acetyl-beta-D-glucosaminyl-(1-&gt;6)]-N-acetyl-alpha-D-galactosaminyl}-L-seryl-[protein] + UDP + H(+). It carries out the reaction a 3-O-[beta-D-galactosyl-(1-&gt;3)-N-acetyl-alpha-D-galactosaminyl]-L-threonyl-[protein] + UDP-N-acetyl-alpha-D-glucosamine = a 3-O-{beta-D-galactosyl-(1-&gt;3)-[N-acetyl-beta-D-glucosaminyl-(1-&gt;6)]-N-acetyl-alpha-D-galactosaminyl}-L-threonyl-[protein] + UDP + H(+). The enzyme catalyses a beta-D-Gal-(1-&gt;4)-beta-D-GlcNAc-(1-&gt;3)-beta-D-Gal-(1-&gt;4)-beta-D-GlcNAc derivative + UDP-N-acetyl-alpha-D-glucosamine = a beta-D-Gal-(1-&gt;4)-beta-D-GlcNAc-(1-&gt;3)-[beta-D-GlcNAc-(1-&gt;6)]-beta-D-Gal-(1-&gt;4)-N-acetyl-beta-D-glucosaminyl derivative + UDP + H(+). The catalysed reaction is 3-O-[N-acetyl-beta-D-glucosaminyl-(1-&gt;3)-N-acetyl-alpha-D-galactosaminyl]-L-seryl-[protein] + UDP-N-acetyl-alpha-D-glucosamine = 3-O-[N-acetyl-beta-D-glucosaminyl-(1-&gt;3)-[N-acetyl-beta-D-glucosaminyl-(1-&gt;6)]-N-acetyl-alpha-D-galactosaminyl]-L-seryl-[protein] + UDP + H(+). It catalyses the reaction a 3-O-[N-acetyl-beta-D-glucosaminyl-(1-&gt;3)-N-acetyl-alpha-D-galactosaminyl]-L-threonyl-[protein] + UDP-N-acetyl-alpha-D-glucosamine = 3-O-[N-acetyl-beta-D-glucosaminyl-(1-&gt;3)-[N-acetyl-beta-D-glucosaminyl-(1-&gt;6)]-N-acetyl-alpha-D-galactosaminyl]-L-threonyl-[protein] + UDP + H(+). It participates in protein modification; protein glycosylation. Its function is as follows. Non-essential glycosyltransferase that can synthesize all known mucin beta 6 N-acetylglucosaminides. Mediates core 2 and core 4 O-glycan branching, 2 important steps in mucin-type biosynthesis. Has also I-branching enzyme activity by converting linear into branched poly-N-acetyllactosaminoglycans. Contributes to the post-translational modifications of structural proteins. The chain is Beta-1,3-galactosyl-O-glycosyl-glycoprotein beta-1,6-N-acetylglucosaminyltransferase (Bo17) from Bovine herpesvirus 4 (BoHV-4).